The following is an 850-amino-acid chain: Transcription initiation factor TFIID subunit 4B (850 aa).

Residues 99-240 (GTTTIQLPAN…TPSNDARLKA (142 aa)) are sufficient for interaction with ZNF628. The region spanning 256-353 (ENVKKCKNFL…VKEVSGDVVI (98 aa)) is the TAFH domain. Residues 504–526 (PSTLLPQAAGIPQTAKVKQLVVQ) are required for interaction with P65/RELA. The Nuclear export signal signature appears at 509-549 (PQAAGIPQTAKVKQLVVQQPSGSSVNHVTSISHSSPLSTQN). Ser584 is subject to Phosphoserine. In terms of domain architecture, Histone-fold spans 642–691 (PFLVIGALQKRILDIGKKHDITELNSDAVNLISHATQERLRGLLEKLTTI). The segment at 788-812 (KRPLESGNESFKDNPSTSGTSSLTA) is disordered. The span at 794–812 (GNESFKDNPSTSGTSSLTA) shows a compositional bias: polar residues. The segment at 818–850 (PRITRICLRDLIFCMEQEREMKYSRALYLALLK) is required for interaction with TAF12.

The protein belongs to the TAF4 family. TFIID is composed of TATA binding protein (TBP) and a number of TBP-associated factors (TAFs). Heterodimerizes with TAF12/TFII20 via the C-terminal H2A-like histone-fold domain. This heterodimer forms a histone-like octamer with the TAF6/TAFII70-TAF9/TAFII31 heterodimer. Interacts with P65/RELA homodimers and P65/RELA-REL heterodimers. Interaction with POU2AF1, via its C-terminal activation domain, is required for octamer-dependent transcription. Interacts with ZNF628. In terms of tissue distribution, highly expressed in the testes and ovary, whereas lower levels are detected in most other tissues.

The protein localises to the nucleus. It localises to the cytoplasm. Cell type-specific subunit of the general transcription factor TFIID that may function as a gene-selective coactivator in certain cells. TFIID is a multimeric protein complex that plays a central role in mediating promoter responses to various activators asond repressors. TAF4B is a transcriptional coactivator of the p65/RELA NF-kappa-B subunit. Involved in the activation of a subset of antiapoptotic genes including TNFAIP3. Through interaction with OCBA/POU2AF1, acts as a coactivator of B-cell-specific transcription. Plays a role in spermiogenesis and oogenesis. This Mus musculus (Mouse) protein is Transcription initiation factor TFIID subunit 4B (Taf4b).